The chain runs to 134 residues: Large-conductance mechanosensitive channel (134 aa).

A run of 2 helical transmembrane segments spans residues phenylalanine 10–glycine 30 and glycine 76–isoleucine 96.

Belongs to the MscL family. In terms of assembly, homopentamer.

Its subcellular location is the cell inner membrane. Functionally, channel that opens in response to stretch forces in the membrane lipid bilayer. May participate in the regulation of osmotic pressure changes within the cell. This chain is Large-conductance mechanosensitive channel, found in Prosthecochloris aestuarii (strain DSM 271 / SK 413).